The chain runs to 155 residues: Ribosome maturation factor RimP (155 aa).

The protein belongs to the RimP family.

The protein localises to the cytoplasm. Required for maturation of 30S ribosomal subunits. In Exiguobacterium sibiricum (strain DSM 17290 / CCUG 55495 / CIP 109462 / JCM 13490 / 255-15), this protein is Ribosome maturation factor RimP.